Reading from the N-terminus, the 215-residue chain is Urease accessory protein UreG (215 aa).

Positions 1–21 (MNAPAPSSARRTKKLPPLRVG) are disordered. 24 to 31 (GPVGSGKT) contacts GTP.

This sequence belongs to the SIMIBI class G3E GTPase family. UreG subfamily. In terms of assembly, homodimer. UreD, UreF and UreG form a complex that acts as a GTP-hydrolysis-dependent molecular chaperone, activating the urease apoprotein by helping to assemble the nickel containing metallocenter of UreC. The UreE protein probably delivers the nickel.

Its subcellular location is the cytoplasm. Functionally, facilitates the functional incorporation of the urease nickel metallocenter. This process requires GTP hydrolysis, probably effectuated by UreG. The protein is Urease accessory protein UreG of Burkholderia lata (strain ATCC 17760 / DSM 23089 / LMG 22485 / NCIMB 9086 / R18194 / 383).